Reading from the N-terminus, the 175-residue chain is ATP-dependent protease subunit HslV (175 aa).

Residue threonine 2 is part of the active site. 3 residues coordinate Na(+): glycine 157, cysteine 160, and threonine 163.

It belongs to the peptidase T1B family. HslV subfamily. In terms of assembly, a double ring-shaped homohexamer of HslV is capped on each side by a ring-shaped HslU homohexamer. The assembly of the HslU/HslV complex is dependent on binding of ATP.

Its subcellular location is the cytoplasm. It carries out the reaction ATP-dependent cleavage of peptide bonds with broad specificity.. With respect to regulation, allosterically activated by HslU binding. Functionally, protease subunit of a proteasome-like degradation complex believed to be a general protein degrading machinery. This Photobacterium profundum (strain SS9) protein is ATP-dependent protease subunit HslV.